We begin with the raw amino-acid sequence, 335 residues long: E3 ubiquitin-protein ligase NLA (335 aa).

The 154-residue stretch at 1 to 154 folds into the SPX domain; sequence MKFCKKYEEY…ESRQGQAFKT (154 aa). The RING-type zinc-finger motif lies at 231-280; sequence CSICLDTVFDPISLTCGHIYCYMCACSAASVNVVDGLKTAEATEKCPLCR.

In terms of assembly, interacts with UBC8. Interacts with PHT1-1 and PHT1-4. Forms homodimers (via RING domain). Interacts with UBC24/PHO2. Interacts with NPF2.13/NRT1.7. Interacts with NAC92/ORE1. As to expression, high expression in roots and stems, medium in seedlings, flowers, rosette and cauline leaves, and very low in siliques. Detected in cotyledons, hypocotyls, pedicel, receptacle, pistil, sepal, filament of stamen and at the two ends of developing siliques.

It localises to the nucleus speckle. The protein resides in the nucleus. The protein localises to the cell membrane. It carries out the reaction S-ubiquitinyl-[E2 ubiquitin-conjugating enzyme]-L-cysteine + [acceptor protein]-L-lysine = [E2 ubiquitin-conjugating enzyme]-L-cysteine + N(6)-ubiquitinyl-[acceptor protein]-L-lysine.. Its pathway is protein modification; protein ubiquitination. Its function is as follows. E3 ubiquitin-protein ligase that mediates E2-dependent protein ubiquitination. Plays a role in salicylic acid-mediated negative feedback regulation of salicylic acid (SA) accumulation. May be involved in the overall regulation of SA, benzoic acid and phenylpropanoid biosynthesis. Involved in defense response. May act as negative regulator of resistance to the necrotrophic fungal pathogen Plectosphaerella cucumerina by modulating the accumulation of the phytoalexin camalexin and the salicylic acid- and jasmonate- dependent defense pathways. Controls the adaptability to nitrogen limitation by channeling the phenylpropanoid metabolic flux to the induced anthocyanin synthesis. Involved in the regulation of inorganic phosphate (Pi) homeostasis in a nitrate-dependent fashion. Directs the ubiquitination and subsequent degradation of the plasma membrane-localized inorganic phosphate transporters PHT1-1 and PHT1-4, to maintain phosphate homeostasis. The ubiquitination of PHTs triggers their clathrin-dependent endocytosis and trafficking to the vacuole through the endosomal pathway for degradation. Functions cooperatively with UBC24/PHO2 to regulate the abundance of PHT1-1, PHT1-2 and PHT1-3 in different subcellular compartments. Regulates Pi homeostasis by mediating, cooperatively with UBC24/PHO2, polyubiquitination of PHT1-4 and its targeting for degradation. Directs the polyubiquitination and subsequent degradation of the plasma membrane-localized nitrate transporter NPF2.13/NRT1.7, to help plants to adapt to nitrogen deficiency by regulating the source-to-sink remobilization of nitrate. Regulates leaf senescence during nitrogen deficiency by mediating, cooperatively with UBC24/PHO2, polyubiquitination of NAC92/ORE1 and its targeting for degradation. This is E3 ubiquitin-protein ligase NLA from Arabidopsis thaliana (Mouse-ear cress).